The following is a 1373-amino-acid chain: DNA-directed RNA polymerase subunit beta (1373 aa).

It belongs to the RNA polymerase beta chain family. As to quaternary structure, the RNAP catalytic core consists of 2 alpha, 1 beta, 1 beta' and 1 omega subunit. When a sigma factor is associated with the core the holoenzyme is formed, which can initiate transcription.

The catalysed reaction is RNA(n) + a ribonucleoside 5'-triphosphate = RNA(n+1) + diphosphate. DNA-dependent RNA polymerase catalyzes the transcription of DNA into RNA using the four ribonucleoside triphosphates as substrates. In Rickettsia conorii (strain ATCC VR-613 / Malish 7), this protein is DNA-directed RNA polymerase subunit beta.